Here is a 774-residue protein sequence, read N- to C-terminus: Probable ubiquitin-like-specific protease 2A (774 aa).

Residues serine 118–valine 141 form a disordered region. Active-site residues include histidine 400, aspartate 430, and cysteine 485. A disordered region spans residues isoleucine 548–glutamine 568.

This sequence belongs to the peptidase C48 family.

Protease that catalyzes two essential functions in the SUMO pathway: processing of full-length SUMOs to their mature forms and deconjugation of SUMO from targeted proteins. The sequence is that of Probable ubiquitin-like-specific protease 2A (ULP2A) from Arabidopsis thaliana (Mouse-ear cress).